We begin with the raw amino-acid sequence, 346 residues long: Galactitol 1-phosphate 5-dehydrogenase (346 aa).

Zn(2+) contacts are provided by Cys38, His59, Cys89, Cys92, Cys95, Cys103, and Glu144.

Belongs to the zinc-containing alcohol dehydrogenase family. It depends on Zn(2+) as a cofactor.

It catalyses the reaction galactitol 1-phosphate + NAD(+) = keto-D-tagatose 6-phosphate + NADH + H(+). Its function is as follows. Converts galactitol 1-phosphate to tagatose 6-phosphate. The chain is Galactitol 1-phosphate 5-dehydrogenase (gatD) from Escherichia coli O157:H7.